Reading from the N-terminus, the 470-residue chain is Cysteine--tRNA ligase (470 aa).

C28 provides a ligand contact to Zn(2+). The 'HIGH' region signature appears at 30 to 40 (PTVYNYIHIGN). The Zn(2+) site is built by C211, H236, and E240. The 'KMSKS' region signature appears at 270-274 (KMSKS). K273 contacts ATP.

The protein belongs to the class-I aminoacyl-tRNA synthetase family. In terms of assembly, monomer. Requires Zn(2+) as cofactor.

Its subcellular location is the cytoplasm. It catalyses the reaction tRNA(Cys) + L-cysteine + ATP = L-cysteinyl-tRNA(Cys) + AMP + diphosphate. The sequence is that of Cysteine--tRNA ligase from Enterococcus faecalis (strain ATCC 700802 / V583).